Reading from the N-terminus, the 311-residue chain is Methionyl-tRNA formyltransferase (311 aa).

110–113 (SLLP) contributes to the (6S)-5,6,7,8-tetrahydrofolate binding site.

It belongs to the Fmt family.

The catalysed reaction is L-methionyl-tRNA(fMet) + (6R)-10-formyltetrahydrofolate = N-formyl-L-methionyl-tRNA(fMet) + (6S)-5,6,7,8-tetrahydrofolate + H(+). Functionally, attaches a formyl group to the free amino group of methionyl-tRNA(fMet). The formyl group appears to play a dual role in the initiator identity of N-formylmethionyl-tRNA by promoting its recognition by IF2 and preventing the misappropriation of this tRNA by the elongation apparatus. The protein is Methionyl-tRNA formyltransferase of Streptococcus agalactiae serotype Ia (strain ATCC 27591 / A909 / CDC SS700).